Here is a 284-residue protein sequence, read N- to C-terminus: 4-hydroxybenzoate octaprenyltransferase (284 aa).

Helical transmembrane passes span 18 to 38 (PIGT…AAEG), 42 to 62 (WHVL…GCVI), 93 to 113 (IILF…MNPL), 136 to 156 (HLPQ…AWAA), 161 to 181 (LPWV…AYDT), 209 to 229 (LIIG…GLHY), 233 to 253 (QSFY…QHLI), and 264 to 284 (AFLN…VAFW).

Belongs to the UbiA prenyltransferase family. Mg(2+) is required as a cofactor.

It is found in the cell inner membrane. The catalysed reaction is all-trans-octaprenyl diphosphate + 4-hydroxybenzoate = 4-hydroxy-3-(all-trans-octaprenyl)benzoate + diphosphate. The protein operates within cofactor biosynthesis; ubiquinone biosynthesis. Catalyzes the prenylation of para-hydroxybenzoate (PHB) with an all-trans polyprenyl group. Mediates the second step in the final reaction sequence of ubiquinone-8 (UQ-8) biosynthesis, which is the condensation of the polyisoprenoid side chain with PHB, generating the first membrane-bound Q intermediate 3-octaprenyl-4-hydroxybenzoate. The polypeptide is 4-hydroxybenzoate octaprenyltransferase (Vibrio vulnificus (strain CMCP6)).